Consider the following 310-residue polypeptide: MARRKKGDAVSGWLCLDKPYDLTSTTAVSRVRRAFNAQKGGHAGTLDPLATGILPIALGEATKTVPFLMDADKAYRFTIAWGRDTTTLDREGETTGTSDVRPTREQVEAALPAFIGEVDQIPPNFSAIKVDGERAYDLARDGVEFELPTRKVSIFDLKVVDQPDADHVTLTMECGKGTYVRAVVRDLAKALGTCGHVADLRRTRVGGFSEASAIALETLENLSYEARLSEALLPVETALDDIPALAVTDEDAFRLAQGRAIVLLPRQVETLKAELPPGDRTVSAMSGDRLVALCEMRAGKLNPVRVFQLT.

Asp47 functions as the Nucleophile in the catalytic mechanism.

This sequence belongs to the pseudouridine synthase TruB family. Type 1 subfamily.

It catalyses the reaction uridine(55) in tRNA = pseudouridine(55) in tRNA. In terms of biological role, responsible for synthesis of pseudouridine from uracil-55 in the psi GC loop of transfer RNAs. The chain is tRNA pseudouridine synthase B from Caulobacter vibrioides (strain ATCC 19089 / CIP 103742 / CB 15) (Caulobacter crescentus).